A 164-amino-acid chain; its full sequence is I-Kappa-B like protein F1 (164 aa).

3 ANK repeats span residues 57 to 89 (HGRQ…NINA), 94 to 124 (TGNT…DLGA), and 128 to 157 (QQET…AYNN).

The protein belongs to the polydnaviridae I-Kappa-B-like protein family.

In terms of biological role, suppresses the host immune response through NF-kappa-B inactivation. Possesses ankyrin repeat domains required for NF-kappa-B binding but lacks the regulatory regions required for dissociation from NF-kappa-B and degradation. Therefore, prevents host NF-kappa-B release and subsequent activation. This Microplitis demolitor bracovirus (isolate Webb) (MdBV) protein is I-Kappa-B like protein F1 (F2).